The chain runs to 330 residues: MALTASVKEELAHLQVRKSAVRAAELSALLRFAGGLHIVAGRIVVEAELDTESVARRAVRTVGEVFGHECELGVMSGGGLRREPTWVVRVARDGEALARRTGLLDAHGRPVRGLPPTVVNGSVDESAAVIRGAFLAHGSLTEPGRAAAMEFTCPGPEAALALVGSARRLDVLAKARQVRGVDRVVVRDGDTIAALLTRLGAHRALLQWEDRRMRKEVRATANRLANFDDANLRRSAQAAVTAGAKVERALDILGDEAPEHLRAAGRLRVANKQASLDELGRLSDPPLTKDAIAGRIRRLLAMADRRAEELGIATTTEFAAQAGGAQARAH.

Residues 275–308 constitute a DNA-binding region (H-T-H motif); it reads SLDELGRLSDPPLTKDAIAGRIRRLLAMADRRAE.

The protein belongs to the WhiA family.

Involved in cell division and chromosome segregation. The sequence is that of Probable cell division protein WhiA from Kocuria rhizophila (strain ATCC 9341 / DSM 348 / NBRC 103217 / DC2201).